The primary structure comprises 484 residues: ATP synthase subunit beta (484 aa).

169–176 (GGAGVGKT) lines the ATP pocket.

The protein belongs to the ATPase alpha/beta chains family. F-type ATPases have 2 components, CF(1) - the catalytic core - and CF(0) - the membrane proton channel. CF(1) has five subunits: alpha(3), beta(3), gamma(1), delta(1), epsilon(1). CF(0) has three main subunits: a(1), b(2) and c(9-12). The alpha and beta chains form an alternating ring which encloses part of the gamma chain. CF(1) is attached to CF(0) by a central stalk formed by the gamma and epsilon chains, while a peripheral stalk is formed by the delta and b chains.

It is found in the cell membrane. The catalysed reaction is ATP + H2O + 4 H(+)(in) = ADP + phosphate + 5 H(+)(out). In terms of biological role, produces ATP from ADP in the presence of a proton gradient across the membrane. The catalytic sites are hosted primarily by the beta subunits. This chain is ATP synthase subunit beta, found in Cutibacterium acnes (strain DSM 16379 / KPA171202) (Propionibacterium acnes).